Here is a 72-residue protein sequence, read N- to C-terminus: Protein SlyX (72 aa).

It belongs to the SlyX family.

This Cronobacter sakazakii (strain ATCC BAA-894) (Enterobacter sakazakii) protein is Protein SlyX.